The chain runs to 224 residues: 7-cyano-7-deazaguanine synthase (224 aa).

12 to 22 (LSGGLDSSTVT) contacts ATP. Cysteine 193, cysteine 201, cysteine 204, and cysteine 207 together coordinate Zn(2+).

It belongs to the QueC family. Zn(2+) is required as a cofactor.

It catalyses the reaction 7-carboxy-7-deazaguanine + NH4(+) + ATP = 7-cyano-7-deazaguanine + ADP + phosphate + H2O + H(+). The protein operates within purine metabolism; 7-cyano-7-deazaguanine biosynthesis. In terms of biological role, catalyzes the ATP-dependent conversion of 7-carboxy-7-deazaguanine (CDG) to 7-cyano-7-deazaguanine (preQ(0)). The chain is 7-cyano-7-deazaguanine synthase from Prochlorococcus marinus (strain MIT 9515).